The sequence spans 430 residues: Asparagine--tRNA ligase (430 aa).

This sequence belongs to the class-II aminoacyl-tRNA synthetase family. Homodimer.

Its subcellular location is the cytoplasm. It carries out the reaction tRNA(Asn) + L-asparagine + ATP = L-asparaginyl-tRNA(Asn) + AMP + diphosphate + H(+). The sequence is that of Asparagine--tRNA ligase from Listeria monocytogenes serotype 4b (strain F2365).